The sequence spans 395 residues: 8-amino-7-oxononanoate synthase (395 aa).

Gly-108–Phe-109 provides a ligand contact to pyridoxal 5'-phosphate. His-134 lines the substrate pocket. Pyridoxal 5'-phosphate contacts are provided by residues Ser-184, Asp-209 to His-212, and Thr-240 to Lys-243. Residue Lys-243 is modified to N6-(pyridoxal phosphate)lysine. Thr-357 is a binding site for substrate.

Belongs to the class-II pyridoxal-phosphate-dependent aminotransferase family. BioF subfamily. In terms of assembly, homodimer. Pyridoxal 5'-phosphate is required as a cofactor.

The enzyme catalyses 6-carboxyhexanoyl-[ACP] + L-alanine + H(+) = (8S)-8-amino-7-oxononanoate + holo-[ACP] + CO2. Its pathway is cofactor biosynthesis; biotin biosynthesis. In terms of biological role, catalyzes the decarboxylative condensation of pimeloyl-[acyl-carrier protein] and L-alanine to produce 8-amino-7-oxononanoate (AON), [acyl-carrier protein], and carbon dioxide. The polypeptide is 8-amino-7-oxononanoate synthase (Fervidobacterium nodosum (strain ATCC 35602 / DSM 5306 / Rt17-B1)).